We begin with the raw amino-acid sequence, 603 residues long: uncharacterized protein (603 aa).

The region spanning 1 to 93 (MSFVIAAPET…AGAYASAEAA (93 aa)) is the PE domain.

The protein belongs to the mycobacterial PE family. PGRS subfamily.

This is an uncharacterized protein from Mycobacterium tuberculosis (strain ATCC 25618 / H37Rv).